The following is a 919-amino-acid chain: MDYKESLLLPKTDFPMRGNLPQNEPVKYKQWDEKKVYEKMKKNRVGCPSFTLHDGPPYANGNIHIGHALNKILKDIINKFHYFEGKSIRYVPGWDCHGLPIEQKVEEKIGSEKKKELPKSKLRQLCRDHATKFVEIQKDEFKKLGVIADWENPYLTMDFKFEANIYRELCAIAKQGLLIQRSKPVYWSWAAQTALAEAEVEYEDKTSPSIYVAFEMSNESKAIHGLENKKAAFVIWTTTPWTLPANTGISLHPVEMYVLTSDGYIVAKALYSKLKEEAVINGEIVTEFEPFMFESNIAINPLNGRTSKIVLGDHVMMDSGTGAVHTAPGHGEDDYKVGLRYNLDVIMPVDAYGKYDETIVREKLFKDTNKYLGLNVFKANELILEELGSALLKRVDIRHSYPHCWRTHTPIIFRATKQWFISIDDKYGNKNNTLRENALEVVENLKFYPEWGRNRLKAMLEGRPDWCISRQRDWGVPIAFFRNKKTDEIIFDEKVLNYTAMIFEQKGCDAWYDLEIKELLYPGSGLNPDDLEKTLDILDVWFDSGSTQNAVLRSRNYDAGTFPADMYLEGSDQHRGWFQSSLLTTLASSEIAPYKSILTHGFTVDEKGEKMSKSKGNVVAPDKVIKEYGSEILRLWVAMSDYQSDLKISDNILKQNGELYRKIRNTARFLLANIDDLEEIIDVSKMGPLDKWILNKAKKVFDEIEAAFNVYEFSKGLNKLNNFLVVDLSGIYLDVCKDRLYCDDKKDIHRLASQSAMALIAKKLISTLACILTYTMDELLEFAPAFIKDGCEDIFDFKKVELPVVESSLDESILLSAKEKFSEIKDALSKEKVIKSTLELMLYTNSEDILALDEVEASDWFLVSQVSKDKQNSDILGSFQIDGKDFEVYKATAHKCPRCWKFTANAEESLCKRCEEVIK.

The 'HIGH' region signature appears at 57–67 (PYANGNIHIGH). Glutamate 569 contributes to the L-isoleucyl-5'-AMP binding site. The short motif at 610–614 (KMSKS) is the 'KMSKS' region element. Lysine 613 provides a ligand contact to ATP. Positions 896, 899, 911, and 914 each coordinate Zn(2+).

This sequence belongs to the class-I aminoacyl-tRNA synthetase family. IleS type 1 subfamily. In terms of assembly, monomer. The cofactor is Zn(2+).

Its subcellular location is the cytoplasm. It catalyses the reaction tRNA(Ile) + L-isoleucine + ATP = L-isoleucyl-tRNA(Ile) + AMP + diphosphate. Catalyzes the attachment of isoleucine to tRNA(Ile). As IleRS can inadvertently accommodate and process structurally similar amino acids such as valine, to avoid such errors it has two additional distinct tRNA(Ile)-dependent editing activities. One activity is designated as 'pretransfer' editing and involves the hydrolysis of activated Val-AMP. The other activity is designated 'posttransfer' editing and involves deacylation of mischarged Val-tRNA(Ile). This is Isoleucine--tRNA ligase from Aliarcobacter butzleri (strain RM4018) (Arcobacter butzleri).